The sequence spans 2005 residues: Structural maintenance of chromosomes flexible hinge domain-containing protein 1 (2005 aa).

Over residues 1-13 the composition is skewed to gly residues; that stretch reads MAAADGGGPGGAS. The segment at 1–23 is disordered; the sequence is MAAADGGGPGGASVGTEEDGGGV. At Ala2 the chain carries N-acetylalanine. Residues 111-702 are ATPase activity domain; that stretch reads TKERIDFLPH…LSVTWPEGDE (592 aa). Lys1349 bears the N6-acetyllysine mark. Glycyl lysine isopeptide (Lys-Gly) (interchain with G-Cter in SUMO2) cross-links involve residues Lys1374 and Lys1496. A Phosphothreonine modification is found at Thr1499. The SMC hinge domain occupies 1720–1847; it reads GDVLGKIAHL…DNLDAANHYR (128 aa). N6-succinyllysine is present on Lys1802. Ser1974 is modified (phosphoserine).

This sequence belongs to the SMC family. Highly divergent. Homodimer; homodimerizes via its SMC hinge domain. Interacts with LRIF1. Post-translationally, sumoylated with SUMO1.

It is found in the chromosome. It carries out the reaction ATP + H2O = ADP + phosphate + H(+). In terms of biological role, non-canonical member of the structural maintenance of chromosomes (SMC) protein family that plays a key role in epigenetic silencing by regulating chromatin architecture. Promotes heterochromatin formation in both autosomes and chromosome X, probably by mediating the merge of chromatin compartments. Plays a key role in chromosome X inactivation in females by promoting the spreading of heterochromatin. Recruited to inactivated chromosome X by Xist RNA and acts by mediating the merge of chromatin compartments: promotes random chromatin interactions that span the boundaries of existing structures, leading to create a compartment-less architecture typical of inactivated chromosome X. Required to facilitate Xist RNA spreading. Also required for silencing of a subset of clustered autosomal loci in somatic cells, such as the DUX4 locus. Has ATPase activity; may participate in structural manipulation of chromatin in an ATP-dependent manner as part of its role in gene expression regulation. Also plays a role in DNA repair: localizes to sites of DNA double-strand breaks in response to DNA damage to promote the repair of DNA double-strand breaks. Acts by promoting non-homologous end joining (NHEJ) and inhibiting homologous recombination (HR) repair. The polypeptide is Structural maintenance of chromosomes flexible hinge domain-containing protein 1 (Homo sapiens (Human)).